Consider the following 434-residue polypeptide: 3-isopropylmalate dehydratase large subunit 1 (434 aa).

3 residues coordinate [4Fe-4S] cluster: Cys-308, Cys-368, and Cys-371.

This sequence belongs to the aconitase/IPM isomerase family. LeuC type 2 subfamily. Heterodimer of LeuC and LeuD. It depends on [4Fe-4S] cluster as a cofactor.

The catalysed reaction is (2R,3S)-3-isopropylmalate = (2S)-2-isopropylmalate. It functions in the pathway amino-acid biosynthesis; L-leucine biosynthesis; L-leucine from 3-methyl-2-oxobutanoate: step 2/4. Functionally, catalyzes the isomerization between 2-isopropylmalate and 3-isopropylmalate, via the formation of 2-isopropylmaleate. This Deinococcus radiodurans (strain ATCC 13939 / DSM 20539 / JCM 16871 / CCUG 27074 / LMG 4051 / NBRC 15346 / NCIMB 9279 / VKM B-1422 / R1) protein is 3-isopropylmalate dehydratase large subunit 1.